The following is a 334-amino-acid chain: GTP 3',8-cyclase (334 aa).

One can recognise a Radical SAM core domain in the interval 11 to 236 (GFNRKIDYLR…ESTESSMGPA (226 aa)). Residue Arg-20 participates in GTP binding. Residues Cys-27 and Cys-31 each contribute to the [4Fe-4S] cluster site. Tyr-33 is a binding site for S-adenosyl-L-methionine. [4Fe-4S] cluster is bound at residue Cys-34. GTP is bound at residue Arg-69. Residue Gly-73 participates in S-adenosyl-L-methionine binding. Position 100 (Thr-100) interacts with GTP. S-adenosyl-L-methionine is bound at residue Ser-124. Position 161 (Lys-161) interacts with GTP. Residue Met-195 participates in S-adenosyl-L-methionine binding. Residues Cys-260 and Cys-263 each coordinate [4Fe-4S] cluster. 265 to 267 (RVR) lines the GTP pocket. Cys-277 is a binding site for [4Fe-4S] cluster.

The protein belongs to the radical SAM superfamily. MoaA family. As to quaternary structure, monomer and homodimer. Requires [4Fe-4S] cluster as cofactor.

The enzyme catalyses GTP + AH2 + S-adenosyl-L-methionine = (8S)-3',8-cyclo-7,8-dihydroguanosine 5'-triphosphate + 5'-deoxyadenosine + L-methionine + A + H(+). Its pathway is cofactor biosynthesis; molybdopterin biosynthesis. Functionally, catalyzes the cyclization of GTP to (8S)-3',8-cyclo-7,8-dihydroguanosine 5'-triphosphate. This chain is GTP 3',8-cyclase, found in Pseudomonas putida (strain ATCC 47054 / DSM 6125 / CFBP 8728 / NCIMB 11950 / KT2440).